The chain runs to 111 residues: UPF0145 protein BTH_I2656 (111 aa).

It belongs to the UPF0145 family.

In Burkholderia thailandensis (strain ATCC 700388 / DSM 13276 / CCUG 48851 / CIP 106301 / E264), this protein is UPF0145 protein BTH_I2656.